Here is a 348-residue protein sequence, read N- to C-terminus: Zinc-type alcohol dehydrogenase-like protein C2E1P3.01 (348 aa).

The protein belongs to the zinc-containing alcohol dehydrogenase family. Quinone oxidoreductase subfamily.

Its subcellular location is the mitochondrion. This chain is Zinc-type alcohol dehydrogenase-like protein C2E1P3.01, found in Schizosaccharomyces pombe (strain 972 / ATCC 24843) (Fission yeast).